Consider the following 174-residue polypeptide: MTTIVSVRRNNQVVIAGDGQVSLGNTVMKGNAKKVRRLYHNKVLAGFAGGTADAFTLFERFESKLEMHQGHLLRSAVELAKDWRTDRMLRKLEAMLVVADAEASLIITGNGDVVQPEHDLVAIGSGGNYAQAAALALLQNTELSALEIAEKSLTIAGDICVFTNQFKTIEELNY.

Thr-2 is a catalytic residue. The Na(+) site is built by Gly-157, Cys-160, and Thr-163.

Belongs to the peptidase T1B family. HslV subfamily. A double ring-shaped homohexamer of HslV is capped on each side by a ring-shaped HslU homohexamer. The assembly of the HslU/HslV complex is dependent on binding of ATP.

It localises to the cytoplasm. The enzyme catalyses ATP-dependent cleavage of peptide bonds with broad specificity.. With respect to regulation, allosterically activated by HslU binding. Functionally, protease subunit of a proteasome-like degradation complex believed to be a general protein degrading machinery. The protein is ATP-dependent protease subunit HslV of Shewanella oneidensis (strain ATCC 700550 / JCM 31522 / CIP 106686 / LMG 19005 / NCIMB 14063 / MR-1).